Consider the following 138-residue polypeptide: DNA-directed RNA polymerase II subunit 4 (138 aa).

Serine 2 is subject to N-acetylserine.

It belongs to the eukaryotic RPB4 RNA polymerase subunit family. Component of the RNA polymerase II complex consisting of at least 12 subunits. Interacts with NRPB7.

Its subcellular location is the nucleus. Functionally, DNA-dependent RNA polymerase catalyzes the transcription of DNA into RNA using the four ribonucleoside triphosphates as substrates. Second largest component of RNA polymerase II which synthesizes mRNA precursors and many functional non-coding RNAs. Proposed to contribute to the polymerase catalytic activity and forms the polymerase active center together with the largest subunit. Pol II is the central component of the basal RNA polymerase II transcription machinery. It is composed of mobile elements that move relative to each other. The chain is DNA-directed RNA polymerase II subunit 4 (NRPB4) from Arabidopsis thaliana (Mouse-ear cress).